Here is a 263-residue protein sequence, read N- to C-terminus: HTH-type transcriptional repressor NanR (263 aa).

The segment at 1–23 is disordered; sequence MSPMNAFDPQAEDSTTTIGRNLR. One can recognise an HTH gntR-type domain in the interval 30–98; that stretch reads KKLSEMVEEE…NGERARVSRP (69 aa). The segment at residues 58–77 is a DNA-binding region (H-T-H motif); sequence ERELMAFFNVGRPSVREALA.

This sequence belongs to the NanR family.

Transcriptional repressor that controls expression of the genes required for the catabolism of sialic acids. In Escherichia coli O45:K1 (strain S88 / ExPEC), this protein is HTH-type transcriptional repressor NanR.